Consider the following 292-residue polypeptide: Ribosomal protein L11 methyltransferase (292 aa).

S-adenosyl-L-methionine is bound by residues Thr-143, Gly-164, Asp-186, and Asn-228.

The protein belongs to the methyltransferase superfamily. PrmA family.

The protein resides in the cytoplasm. It catalyses the reaction L-lysyl-[protein] + 3 S-adenosyl-L-methionine = N(6),N(6),N(6)-trimethyl-L-lysyl-[protein] + 3 S-adenosyl-L-homocysteine + 3 H(+). Methylates ribosomal protein L11. In Tolumonas auensis (strain DSM 9187 / NBRC 110442 / TA 4), this protein is Ribosomal protein L11 methyltransferase.